The chain runs to 231 residues: Ribose-5-phosphate isomerase A (231 aa).

Residues 28–31 (TGST), 83–86 (DGAD), and 96–99 (KGGG) contribute to the substrate site. E105 functions as the Proton acceptor in the catalytic mechanism. Residue K123 coordinates substrate.

This sequence belongs to the ribose 5-phosphate isomerase family. In terms of assembly, homodimer.

The catalysed reaction is aldehydo-D-ribose 5-phosphate = D-ribulose 5-phosphate. It participates in carbohydrate degradation; pentose phosphate pathway; D-ribose 5-phosphate from D-ribulose 5-phosphate (non-oxidative stage): step 1/1. Catalyzes the reversible conversion of ribose-5-phosphate to ribulose 5-phosphate. The protein is Ribose-5-phosphate isomerase A of Sinorhizobium medicae (strain WSM419) (Ensifer medicae).